The primary structure comprises 55 residues: Spermatid nuclear transition protein 1 (55 aa).

Residues 1–42 (MSTSRKLKSQGMRRGKNRTPHKGVKRSGSKRKYRKSSLKSRK) are compositionally biased toward basic residues. Residues 1 to 55 (MSTSRKLKSQGMRRGKNRTPHKGVKRSGSKRKYRKSSLKSRKRCDDANRNLRSHL) are disordered. Ser-9, Ser-36, Ser-37, and Ser-40 each carry phosphoserine.

This sequence belongs to the nuclear transition protein 1 family. In terms of tissue distribution, testis.

It localises to the nucleus. It is found in the chromosome. Plays a key role in the replacement of histones to protamine in the elongating spermatids of mammals. In condensing spermatids, loaded onto the nucleosomes, where it promotes the recruitment and processing of protamines, which are responsible for histone eviction. This chain is Spermatid nuclear transition protein 1 (TNP1), found in Bos taurus (Bovine).